Here is a 114-residue protein sequence, read N- to C-terminus: Cytochrome b-c1 complex subunit 1, mitochondrial (114 aa).

Lys31 carries the post-translational modification N6-acetyllysine.

This sequence belongs to the peptidase M16 family. UQCRC1/QCR1 subfamily. As to quaternary structure, component of the ubiquinol-cytochrome c oxidoreductase (cytochrome b-c1 complex, complex III, CIII), a multisubunit enzyme composed of 11 subunits. The complex is composed of 3 respiratory subunits cytochrome b, cytochrome c1 and Rieske protein UQCRFS1, 2 core protein subunits UQCRC1/QCR1 and UQCRC2/QCR2, and 6 low-molecular weight protein subunits UQCRH/QCR6, UQCRB/QCR7, UQCRQ/QCR8, UQCR10/QCR9, UQCR11/QCR10 and subunit 9, the cleavage product of Rieske protein UQCRFS1. The complex exists as an obligatory dimer and forms supercomplexes (SCs) in the inner mitochondrial membrane with NADH-ubiquinone oxidoreductase (complex I, CI) and cytochrome c oxidase (complex IV, CIV), resulting in different assemblies (supercomplex SCI(1)III(2)IV(1) and megacomplex MCI(2)III(2)IV(2)). Interacts with UQCC6. Interacts with STMP1.

Its subcellular location is the mitochondrion inner membrane. In terms of biological role, component of the ubiquinol-cytochrome c oxidoreductase, a multisubunit transmembrane complex that is part of the mitochondrial electron transport chain which drives oxidative phosphorylation. The respiratory chain contains 3 multisubunit complexes succinate dehydrogenase (complex II, CII), ubiquinol-cytochrome c oxidoreductase (cytochrome b-c1 complex, complex III, CIII) and cytochrome c oxidase (complex IV, CIV), that cooperate to transfer electrons derived from NADH and succinate to molecular oxygen, creating an electrochemical gradient over the inner membrane that drives transmembrane transport and the ATP synthase. The cytochrome b-c1 complex catalyzes electron transfer from ubiquinol to cytochrome c, linking this redox reaction to translocation of protons across the mitochondrial inner membrane, with protons being carried across the membrane as hydrogens on the quinol. In the process called Q cycle, 2 protons are consumed from the matrix, 4 protons are released into the intermembrane space and 2 electrons are passed to cytochrome c. The 2 core subunits UQCRC1/QCR1 and UQCRC2/QCR2 are homologous to the 2 mitochondrial-processing peptidase (MPP) subunits beta-MPP and alpha-MPP respectively, and they seem to have preserved their MPP processing properties. May be involved in the in situ processing of UQCRFS1 into the mature Rieske protein and its mitochondrial targeting sequence (MTS)/subunit 9 when incorporated into complex III. Seems to play an important role in the maintenance of proper mitochondrial function in nigral dopaminergic neurons. This Mesocricetus auratus (Golden hamster) protein is Cytochrome b-c1 complex subunit 1, mitochondrial.